The chain runs to 87 residues: Small ribosomal subunit protein uS17 (87 aa).

This sequence belongs to the universal ribosomal protein uS17 family. Part of the 30S ribosomal subunit.

Functionally, one of the primary rRNA binding proteins, it binds specifically to the 5'-end of 16S ribosomal RNA. This chain is Small ribosomal subunit protein uS17, found in Lacticaseibacillus casei (strain BL23) (Lactobacillus casei).